The primary structure comprises 137 residues: DNA-binding protein H-NS (137 aa).

The DNA-binding element occupies 112-117 (QGRTPA).

Belongs to the histone-like protein H-NS family. In terms of assembly, homodimer that oligomerizes on DNA into higher-order complexes that form bridges between disparate regions of DNA compacting it. Interacts with Hha, YdgT and StpA.

It localises to the cytoplasm. It is found in the nucleoid. Functionally, a DNA-binding protein implicated in transcriptional repression and chromosome organization and compaction. Binds nucleation sites in AT-rich DNA and bridges them, forming higher-order nucleoprotein complexes and condensing the chromosome. As many horizontally transferred genes are AT-rich, it plays a central role in silencing foreign genes. A subset of genes are repressed by H-NS in association with other proteins. This Salmonella paratyphi A (strain ATCC 9150 / SARB42) protein is DNA-binding protein H-NS (hns).